A 108-amino-acid polypeptide reads, in one-letter code: UPF0145 protein Tmel_1129 (108 aa).

Belongs to the UPF0145 family.

The protein is UPF0145 protein Tmel_1129 of Thermosipho melanesiensis (strain DSM 12029 / CIP 104789 / BI429).